The primary structure comprises 212 residues: Nascent polypeptide-associated complex subunit alpha-like protein 4 (212 aa).

The span at 25-35 shows a compositional bias: basic and acidic residues; sequence QKENDVVVEDV. Residues 25–74 are disordered; that stretch reads QKENDVVVEDVKDGDEDDDDVDDDDDEIADGAGENEASKQSRSEKKSRKA. Residues 36–53 are compositionally biased toward acidic residues; the sequence is KDGDEDDDDVDDDDDEIA. An NAC-A/B domain is found at 65–130; that stretch reads SRSEKKSRKA…AKIDDMSSQL (66 aa). The region spanning 173–210 is the UBA domain; it reads VEAKDIDLVMTQAGVSRPKAVKALKESNGDIVSAIMEL.

Belongs to the NAC-alpha family.

Its function is as follows. May promote appropriate targeting of ribosome-nascent polypeptide complexes. The chain is Nascent polypeptide-associated complex subunit alpha-like protein 4 from Arabidopsis thaliana (Mouse-ear cress).